Consider the following 173-residue polypeptide: Photosystem I assembly protein Ycf3 (173 aa).

TPR repeat units lie at residues 36-69 (AFAY…EQDD), 73-106 (SYIL…NPRL), and 121-154 (GEQS…APNN).

Belongs to the Ycf3 family.

It localises to the cellular thylakoid membrane. Functionally, essential for the assembly of the photosystem I (PSI) complex. May act as a chaperone-like factor to guide the assembly of the PSI subunits. The chain is Photosystem I assembly protein Ycf3 from Synechococcus sp. (strain JA-3-3Ab) (Cyanobacteria bacterium Yellowstone A-Prime).